Reading from the N-terminus, the 342-residue chain is Uroporphyrinogen decarboxylase (342 aa).

Residues 22–26 (RQAGR), phenylalanine 42, aspartate 72, tyrosine 146, serine 201, and histidine 317 contribute to the substrate site.

It belongs to the uroporphyrinogen decarboxylase family. In terms of assembly, homodimer.

The protein resides in the cytoplasm. It carries out the reaction uroporphyrinogen III + 4 H(+) = coproporphyrinogen III + 4 CO2. The protein operates within porphyrin-containing compound metabolism; protoporphyrin-IX biosynthesis; coproporphyrinogen-III from 5-aminolevulinate: step 4/4. Functionally, catalyzes the decarboxylation of four acetate groups of uroporphyrinogen-III to yield coproporphyrinogen-III. This is Uroporphyrinogen decarboxylase from Orientia tsutsugamushi (strain Ikeda) (Rickettsia tsutsugamushi).